The chain runs to 210 residues: Cdc42 effector protein 2 (210 aa).

Ser2 is modified (N-acetylserine). The 15-residue stretch at 30–44 (ISPPLGDFRHTIHIG) folds into the CRIB domain. Phosphoserine is present on residues Ser31, Ser101, and Ser141. The interval 124 to 145 (AQAPPKPPRLHLETPQASPQEA) is disordered.

This sequence belongs to the BORG/CEP family. In terms of assembly, interacts with CDC42 and RHOQ, in a GTP-dependent manner, and with SEPT7.

Its subcellular location is the endomembrane system. It is found in the cytoplasm. The protein localises to the cytoskeleton. Its function is as follows. Probably involved in the organization of the actin cytoskeleton. May act downstream of CDC42 to induce actin filament assembly leading to cell shape changes. Induces pseudopodia formation in fibroblasts in a CDC42-dependent manner. The sequence is that of Cdc42 effector protein 2 (CDC42EP2) from Bos taurus (Bovine).